We begin with the raw amino-acid sequence, 811 residues long: Lysine-specific histone demethylase 1 homolog 3 (811 aa).

Over residues 1–10 the composition is skewed to pro residues; the sequence is MSDQPPPYTP. A disordered region spans residues 1–79; that stretch reads MSDQPPPYTP…PSAQPPPRAS (79 aa). A compositionally biased stretch (basic residues) spans 44–55; the sequence is NKRKRTGFRRKL. Low complexity predominate over residues 56–71; that stretch reads PSGSPAAPVAVAASPS. The region spanning 88–189 is the SWIRM domain; sequence NREPTAEAVT…FGVAPAIKER (102 aa). FAD-binding residues include Glu227, Arg229, Arg235, and Glu609. Positions 790-811 are disordered; the sequence is RNSSRTKTRPSKLKIGIPKSKS.

Belongs to the flavin monoamine oxidase family. Requires FAD as cofactor.

Its function is as follows. Probable histone demethylase. The chain is Lysine-specific histone demethylase 1 homolog 3 from Oryza sativa subsp. japonica (Rice).